Consider the following 417-residue polypeptide: Sulfite reductase, dissimilatory-type subunit alpha (417 aa).

Cys-170, Cys-176, Cys-214, Cys-218, Cys-264, Cys-284, Cys-287, and Cys-290 together coordinate [4Fe-4S] cluster. A siroheme-binding site is contributed by Cys-218.

Requires [4Fe-4S] cluster as cofactor. Siroheme serves as cofactor.

The catalysed reaction is [DsrC protein]-trisulfide + NAD(+) + 3 H2O = [DsrC protein]-dithiol + sulfite + NADH + 3 H(+). Its function is as follows. Catalyzes the reduction of sulfite to sulfide. This is the terminal oxidation reaction in sulfate respiration. In Allochromatium vinosum (strain ATCC 17899 / DSM 180 / NBRC 103801 / NCIMB 10441 / D) (Chromatium vinosum), this protein is Sulfite reductase, dissimilatory-type subunit alpha (dsrA).